Reading from the N-terminus, the 73-residue chain is Translation initiation factor IF-1 (73 aa).

The S1-like domain maps to 1 to 73; sequence MPKKDGVIEI…SRGRIVYRYK (73 aa).

It belongs to the IF-1 family. In terms of assembly, component of the 30S ribosomal translation pre-initiation complex which assembles on the 30S ribosome in the order IF-2 and IF-3, IF-1 and N-formylmethionyl-tRNA(fMet); mRNA recruitment can occur at any time during PIC assembly.

It is found in the cytoplasm. One of the essential components for the initiation of protein synthesis. Stabilizes the binding of IF-2 and IF-3 on the 30S subunit to which N-formylmethionyl-tRNA(fMet) subsequently binds. Helps modulate mRNA selection, yielding the 30S pre-initiation complex (PIC). Upon addition of the 50S ribosomal subunit IF-1, IF-2 and IF-3 are released leaving the mature 70S translation initiation complex. This chain is Translation initiation factor IF-1, found in Kineococcus radiotolerans (strain ATCC BAA-149 / DSM 14245 / SRS30216).